The chain runs to 286 residues: MSIQFNQVSYIYQQGTPYEFEAIKNVSLTLEQGKYYAIIGQTGSGKSTLIQHLNALLKPTTGSVNINGLEVTNKTKDKHLRHIRKEVGIVFQFPESQLFEDSVEKEIEFGPKNFNMNLKNVKDKAFQLLLELGFSRNVMSSSPFQMSGGQMRKIAIVSILAMDPQVIILDEPTAGLDPNSKHQVMSLIKKIQIEENKTIILVSHDMDDVARYSDEVVVMNKGTIVEKSNPRNLFSQKTQLLKWHIELPKVVKLQKDIEKKYNMLFPKLATNEEEFVKLYKEWHHEK.

In terms of domain architecture, ABC transporter spans 3-246 (IQFNQVSYIY…KTQLLKWHIE (244 aa)). Residue 40 to 47 (GQTGSGKS) participates in ATP binding.

This sequence belongs to the ABC transporter superfamily. Energy-coupling factor EcfA family. Forms a stable energy-coupling factor (ECF) transporter complex composed of 2 membrane-embedded substrate-binding proteins (S component), 2 ATP-binding proteins (A component) and 2 transmembrane proteins (T component).

The protein localises to the cell membrane. ATP-binding (A) component of a common energy-coupling factor (ECF) ABC-transporter complex. Unlike classic ABC transporters this ECF transporter provides the energy necessary to transport a number of different substrates. In Staphylococcus epidermidis (strain ATCC 12228 / FDA PCI 1200), this protein is Energy-coupling factor transporter ATP-binding protein EcfA2.